Here is a 629-residue protein sequence, read N- to C-terminus: UvrABC system protein C (629 aa).

A GIY-YIG domain is found at 12 to 91 (DRPGCYLFKD…IKKHKPKYNI (80 aa)). In terms of domain architecture, UVR spans 200-235 (QEVLERLRARMEQAAERLEFERAAELRDQIRAIEKV).

This sequence belongs to the UvrC family. As to quaternary structure, interacts with UvrB in an incision complex.

Its subcellular location is the cytoplasm. Functionally, the UvrABC repair system catalyzes the recognition and processing of DNA lesions. UvrC both incises the 5' and 3' sides of the lesion. The N-terminal half is responsible for the 3' incision and the C-terminal half is responsible for the 5' incision. The sequence is that of UvrABC system protein C from Symbiobacterium thermophilum (strain DSM 24528 / JCM 14929 / IAM 14863 / T).